The following is a 111-amino-acid chain: Phosphoribosyl-ATP pyrophosphatase (111 aa).

The protein belongs to the PRA-PH family.

The protein localises to the cytoplasm. It carries out the reaction 1-(5-phospho-beta-D-ribosyl)-ATP + H2O = 1-(5-phospho-beta-D-ribosyl)-5'-AMP + diphosphate + H(+). It functions in the pathway amino-acid biosynthesis; L-histidine biosynthesis; L-histidine from 5-phospho-alpha-D-ribose 1-diphosphate: step 2/9. The polypeptide is Phosphoribosyl-ATP pyrophosphatase (Pseudomonas putida (strain GB-1)).